Here is a 343-residue protein sequence, read N- to C-terminus: Follistatin (343 aa).

Residues 1–28 (MLNQRIHPGMLVLLMFLYHFMEDHTAQA) form the signal peptide. The TB domain maps to 29–102 (GNCWLRQARN…TCENVDCGPG (74 aa)). Intrachain disulfides connect cysteine 31/cysteine 54, cysteine 41/cysteine 87, cysteine 55/cysteine 90, cysteine 94/cysteine 105, cysteine 99/cysteine 115, cysteine 117/cysteine 149, cysteine 121/cysteine 142, and cysteine 131/cysteine 163. Positions 93–116 (TCENVDCGPGKKCKMNKKNKPRCV) constitute a Follistatin-like 1 domain. 3 consecutive Kazal-like domains span residues 99 to 165 (CGPG…KCKK), 185 to 240 (NAYC…KCIK), and 263 to 317 (RGRC…SCNS). Residue asparagine 123 is glycosylated (N-linked (GlcNAc...) asparagine). One can recognise a Follistatin-like 2 domain in the interval 166–189 (TCRDVLCPGSSTCVVDQTNNAYCV). 3 disulfides stabilise this stretch: cysteine 191/cysteine 224, cysteine 195/cysteine 217, and cysteine 206/cysteine 238. The Follistatin-like 3 domain occupies 243–267 (SCEDIQCSAGKKCLWDFKVGRGRCA). 3 disulfide bridges follow: cysteine 269–cysteine 301, cysteine 273–cysteine 294, and cysteine 283–cysteine 315. A glycan (N-linked (GlcNAc...) asparagine) is linked at asparagine 287. A disordered region spans residues 315–343 (CNSINEDPEEEEEDEDQDYSFPISSILEW). Residues 320-332 (EDPEEEEEDEDQD) are compositionally biased toward acidic residues.

In terms of assembly, monomer. Ciliary ganglion neurons. Levels are higher in the iris than the choroid.

It is found in the secreted. Binds directly to activin and functions as an activin antagonist. Inhibits activin A signaling in the iris and regulates somatostatin phenotype in ciliary ganglion neurons. Specific inhibitor of the biosynthesis and secretion of pituitary follicle stimulating hormone (FSH). The protein is Follistatin (FST) of Gallus gallus (Chicken).